The following is a 106-amino-acid chain: Large ribosomal subunit protein bL21 (106 aa).

The protein belongs to the bacterial ribosomal protein bL21 family. Part of the 50S ribosomal subunit. Contacts protein L20.

This protein binds to 23S rRNA in the presence of protein L20. This Chlamydia felis (strain Fe/C-56) (Chlamydophila felis) protein is Large ribosomal subunit protein bL21.